The sequence spans 346 residues: Histone PARylation factor 1 (346 aa).

Residue Met1 is modified to N-acetylmethionine. A disordered region spans residues Met1–Val23. At Lys19 the chain carries N6-acetyllysine. Ser97 carries the post-translational modification ADP-ribosylserine. Residues Lys186 and Lys233 each carry the N6-acetyllysine modification. Asp235 is modified (polyADP-ribosyl aspartic acid). Tyr238 is modified (ADP-ribosyltyrosine). A PolyADP-ribosyl glutamic acid modification is found at Glu240. The segment at Pro242–Ala346 is interaction with PARP1. Glu284 acts as the Proton donor in catalysis.

This sequence belongs to the HPF1 family. In terms of assembly, interacts with PARP1 (via the PARP catalytic domain). Interacts with PARP2 (via the PARP catalytic domain). Interacts with core nucleosomes in a PARP1- and PARP2-dependent manner.

Its subcellular location is the chromosome. It localises to the nucleus. In terms of biological role, cofactor for serine ADP-ribosylation that confers serine specificity on PARP1 and PARP2 and plays a key role in DNA damage response. Initiates the repair of double-strand DNA breaks: recruited to DNA damage sites by PARP1 and PARP2 and switches the amino acid specificity of PARP1 and PARP2 from aspartate or glutamate to serine residues, licensing serine ADP-ribosylation of target proteins. Serine ADP-ribosylation of target proteins, such as histones, promotes decompaction of chromatin and the recruitment of repair factors leading to the reparation of DNA strand breaks. Serine ADP-ribosylation of proteins constitutes the primary form of ADP-ribosylation of proteins in response to DNA damage. HPF1 acts by completing the active site of PARP1 and PARP2: forms a composite active site composed of residues from HPF1 and PARP1 or PARP2. While HPF1 promotes the initiation of serine ADP-ribosylation, it restricts the polymerase activity of PARP1 and PARP2 in order to limit the length of poly-ADP-ribose chains. HPF1 also promotes tyrosine ADP-ribosylation, probably by conferring tyrosine specificity on PARP1. This Homo sapiens (Human) protein is Histone PARylation factor 1.